A 339-amino-acid chain; its full sequence is Isopentenyl-diphosphate delta-isomerase (339 aa).

Arg7–Lys8 is a binding site for substrate. FMN is bound by residues Ser65, Ser66–Thr68, Ser96, and Asn125. Ser96–Arg98 contributes to the substrate binding site. Gln160 serves as a coordination point for substrate. Glu161 contacts Mg(2+). Residues Lys192, Thr222, and Ala293–Gly294 contribute to the FMN site.

It belongs to the IPP isomerase type 2 family. Homooctamer. Dimer of tetramers. FMN is required as a cofactor. It depends on NADPH as a cofactor. Mg(2+) serves as cofactor.

The protein localises to the cytoplasm. The enzyme catalyses isopentenyl diphosphate = dimethylallyl diphosphate. Involved in the biosynthesis of isoprenoids. Catalyzes the 1,3-allylic rearrangement of the homoallylic substrate isopentenyl (IPP) to its allylic isomer, dimethylallyl diphosphate (DMAPP). The protein is Isopentenyl-diphosphate delta-isomerase of Vibrio campbellii (strain ATCC BAA-1116).